Reading from the N-terminus, the 1529-residue chain is MSSDIRDVEERNSRSSSSSSSSNSAAQSIGQHPYRGFDSEAAERVHELARTLTSQSLLYTANSNNSSSSNHNAHNADSRSVFSTDMEGVNPVFTNPDTPGYNPKLDPNSDQFSSTAWVQNMANICTSDPDFYKPYSLGCVWKNLSASGDSADVSYQSTFANIVPKLLTKGLRLLKPSKEEDTFQILKPMDGCLNPGELLVVLGRPGSGCTTLLKSISSNSHGFKIAKDSIVSYNGLSSSDIRKHYRGEVVYNAESDIHLPHLTVYQTLFTVARMKTPQNRIKGVDREAYANHVTEVAMATYGLSHTRDTKVGNDLVRGVSGGERKRVSIAEVAICGARFQCWDNATRGLDSATALEFIRALKTQADIGKTAATVAIYQCSQDAYDLFDKVCVLDDGYQLYFGPAKDAKKYFQDMGYYCPPRQTTADFLTSITSPTERIISKEFIEKGTRVPQTPKDMAEYWLQSESYKNLIKDIDSTLEKNTDEARNIIRDAHHAKQAKRAPPSSPYVVNYGMQVKYLLIRNFWRMKQSASVTLWQVIGNSVMAFILGSMFYKVMKKNDTSTFYFRGAAMFFAILFNAFSCLLEIFSLYETRPITEKHRTYSLYHPSADAFASVLSEMPPKLITAVCFNIIFYFLVDFRRNGGVFFFYFLINVIATFTLSHLFRCVGSLTKTLQEAMVPASMLLLAISMYTGFAIPKTKILGWSIWIWYINPLAYLFESLMINEFHDRRFPCAQYIPAGPAYQNITGTQRVCSAVGAYPGNDYVLGDDFLKESYDYEHKHKWRGFGIGMAYVVFFFFVYLILCEYNEGAKQKGEMVVFLRSKIKQLKKEGKLQEKHRPGDIENNAGSSPDSATTEKKILDDSSEGSDSSSDNAGLGLSKSEAIFHWRDLCYDVPIKGGQRRILNNVDGWVKPGTLTALMGASGAGKTTLLDCLAERVTMGVITGNIFVDGRLRDESFPRSIGYCQQQDLHLKTATVRESLRFSAYLRQPSSVSIEEKNRYVEEVIKILEMQQYSDAVVGVAGEGLNVEQRKRLTIGVELAARPKLLVFLDEPTSGLDSQTAWDTCQLMRKLATHGQAILCTIHQPSAILMQQFDRLLFLQKGGQTVYFGDLGEGCKTMIDYFESKGAHKCPPDANPAEWMLEVVGAAPGSHATQDYNEVWRNSDEYKAVQEELDWMEKNLPGRSKEPTAEEHKPFAASLYYQFKMVTIRLFQQYWRSPDYLWSKFILTIFNQVFIGFTFFKADRSLQGLQNQMLSIFMYTVIFNPILQQYLPSFVQQRDLYEARERPSRTFSWLAFFLSQIIVEIPWNILAGTIAYCIYYYAVGFYANASAAGQLHERGALFWLFSIAFYVYIGSMGLLMISFNEVAETAAHMGTLLFTMALSFCGVMATPKVMPRFWIFMYRVSPLTYMIDALLALGVANVDVKCSNYEMVKFTPPSGTTCGDYMASYIKLAGTGYLSDPSATDICSFCAVSTTNAFLATFSSHYYRRWRNYGIFICYIAFDYIAATFLYWLSRVPKKNGKISEKPKK.

Positions 1 to 13 are enriched in basic and acidic residues; it reads MSSDIRDVEERNS. The segment at 1–38 is disordered; the sequence is MSSDIRDVEERNSRSSSSSSSSNSAAQSIGQHPYRGFD. Residues 1–531 lie on the Cytoplasmic side of the membrane; the sequence is MSSDIRDVEE…NFWRMKQSAS (531 aa). Low complexity predominate over residues 14-24; it reads RSSSSSSSSNS. Residues 171–420 form the ABC transporter 1 domain; the sequence is LRLLKPSKEE…FQDMGYYCPP (250 aa). A helical transmembrane segment spans residues 532–552; it reads VTLWQVIGNSVMAFILGSMFY. Topologically, residues 553–567 are extracellular; it reads KVMKKNDTSTFYFRG. N-linked (GlcNAc...) asparagine glycosylation occurs at Asn558. A helical transmembrane segment spans residues 568-588; sequence AAMFFAILFNAFSCLLEIFSL. Residues 589–617 lie on the Cytoplasmic side of the membrane; it reads YETRPITEKHRTYSLYHPSADAFASVLSE. A helical membrane pass occupies residues 618–638; the sequence is MPPKLITAVCFNIIFYFLVDF. Residues 639–642 are Extracellular-facing; that stretch reads RRNG. The helical transmembrane segment at 643–663 threads the bilayer; that stretch reads GVFFFYFLINVIATFTLSHLF. At 664-699 the chain is on the cytoplasmic side; sequence RCVGSLTKTLQEAMVPASMLLLAISMYTGFAIPKTK. Residues 700–720 traverse the membrane as a helical segment; sequence ILGWSIWIWYINPLAYLFESL. The Extracellular portion of the chain corresponds to 721–783; the sequence is MINEFHDRRF…YDYEHKHKWR (63 aa). An N-linked (GlcNAc...) asparagine glycan is attached at Asn744. The helical transmembrane segment at 784 to 804 threads the bilayer; that stretch reads GFGIGMAYVVFFFFVYLILCE. Residues 805-1219 lie on the Cytoplasmic side of the membrane; the sequence is YNEGAKQKGE…LFQQYWRSPD (415 aa). Residues 829–840 are compositionally biased toward basic and acidic residues; the sequence is EGKLQEKHRPGD. The disordered stretch occupies residues 829–873; sequence EGKLQEKHRPGDIENNAGSSPDSATTEKKILDDSSEGSDSSSDNA. The ABC transporter 2 domain maps to 884 to 1127; that stretch reads FHWRDLCYDV…MIDYFESKGA (244 aa). 920–927 contributes to the ATP binding site; it reads GASGAGKT. Residues 1220–1240 traverse the membrane as a helical segment; it reads YLWSKFILTIFNQVFIGFTFF. The Extracellular portion of the chain corresponds to 1241-1312; sequence KADRSLQGLQ…VEIPWNILAG (72 aa). The chain crosses the membrane as a helical span at residues 1313–1333; it reads TIAYCIYYYAVGFYANASAAG. Over 1334–1340 the chain is Cytoplasmic; the sequence is QLHERGA. The chain crosses the membrane as a helical span at residues 1341–1361; it reads LFWLFSIAFYVYIGSMGLLMI. The Extracellular portion of the chain corresponds to 1362–1368; that stretch reads SFNEVAE. A helical membrane pass occupies residues 1369–1389; the sequence is TAAHMGTLLFTMALSFCGVMA. Residues 1390 to 1396 are Cytoplasmic-facing; the sequence is TPKVMPR. The chain crosses the membrane as a helical span at residues 1397–1417; the sequence is FWIFMYRVSPLTYMIDALLAL. Topologically, residues 1418-1492 are extracellular; that stretch reads GVANVDVKCS…SSHYYRRWRN (75 aa). The chain crosses the membrane as a helical span at residues 1493–1513; that stretch reads YGIFICYIAFDYIAATFLYWL. The Cytoplasmic segment spans residues 1514-1529; sequence SRVPKKNGKISEKPKK.

Belongs to the ABC transporter superfamily. ABCG family. PDR (TC 3.A.1.205) subfamily.

It is found in the membrane. In Saccharomyces cerevisiae (strain ATCC 204508 / S288c) (Baker's yeast), this protein is ATP-dependent permease PDR15 (PDR15).